Here is a 463-residue protein sequence, read N- to C-terminus: tRNA-2-methylthio-N(6)-dimethylallyladenosine synthase (463 aa).

Residues 5-125 (RKLHIKSYGC…LPQLLAKAEQ (121 aa)) enclose the MTTase N-terminal domain. [4Fe-4S] cluster is bound by residues Cys-14, Cys-50, Cys-88, Cys-166, Cys-170, and Cys-173. Residues 152–384 (RARGISAFVT…QQLIDQQQSA (233 aa)) enclose the Radical SAM core domain. One can recognise a TRAM domain in the interval 387 to 449 (KAAIGRTVEV…RYSLLGELAS (63 aa)).

This sequence belongs to the methylthiotransferase family. MiaB subfamily. In terms of assembly, monomer. Requires [4Fe-4S] cluster as cofactor.

Its subcellular location is the cytoplasm. The enzyme catalyses N(6)-dimethylallyladenosine(37) in tRNA + (sulfur carrier)-SH + AH2 + 2 S-adenosyl-L-methionine = 2-methylsulfanyl-N(6)-dimethylallyladenosine(37) in tRNA + (sulfur carrier)-H + 5'-deoxyadenosine + L-methionine + A + S-adenosyl-L-homocysteine + 2 H(+). Its function is as follows. Catalyzes the methylthiolation of N6-(dimethylallyl)adenosine (i(6)A), leading to the formation of 2-methylthio-N6-(dimethylallyl)adenosine (ms(2)i(6)A) at position 37 in tRNAs that read codons beginning with uridine. This chain is tRNA-2-methylthio-N(6)-dimethylallyladenosine synthase, found in Rhodopseudomonas palustris (strain ATCC BAA-98 / CGA009).